The sequence spans 867 residues: Probable beta-glucosidase A (867 aa).

Positions 1 to 18 (MRFSWLEVAVTAASLANA) are cleaved as a signal peptide. 3 N-linked (GlcNAc...) asparagine glycosylation sites follow: asparagine 67, asparagine 218, and asparagine 259. The active site involves aspartate 287. Residues asparagine 322, asparagine 329, asparagine 361, asparagine 449, asparagine 530, asparagine 549, asparagine 571, asparagine 675, and asparagine 719 are each glycosylated (N-linked (GlcNAc...) asparagine).

Belongs to the glycosyl hydrolase 3 family.

The protein resides in the secreted. It carries out the reaction Hydrolysis of terminal, non-reducing beta-D-glucosyl residues with release of beta-D-glucose.. It functions in the pathway glycan metabolism; cellulose degradation. Beta-glucosidases are one of a number of cellulolytic enzymes involved in the degradation of cellulosic biomass. Catalyzes the last step releasing glucose from the inhibitory cellobiose. This Aspergillus clavatus (strain ATCC 1007 / CBS 513.65 / DSM 816 / NCTC 3887 / NRRL 1 / QM 1276 / 107) protein is Probable beta-glucosidase A (bglA).